Consider the following 530-residue polypeptide: PC4 and SFRS1-interacting protein (530 aa).

The region spanning 1-64 is the PWWP domain; the sequence is MTRDFKPGDL…PKDIFPYSEN (64 aa). A Glycyl lysine isopeptide (Lys-Gly) (interchain with G-Cter in SUMO2) cross-link involves residue Lys75. A disordered region spans residues 88–349; the sequence is PKVKFSSQQA…VEKKRETSMD (262 aa). The segment covering 92 to 104 has biased composition (polar residues); sequence FSSQQAATKQSNA. Phosphoserine occurs at positions 102, 105, and 106. Residues 113–135 are compositionally biased toward basic and acidic residues; that stretch reads KETSVSKEDTDHEEKASNEDVTK. A phosphothreonine mark is found at Thr115 and Thr122. Position 129 is a phosphoserine (Ser129). Phosphothreonine is present on Thr141. Positions 144-153 are enriched in basic residues; sequence AARRGRKRKA. The short motif at 146–156 is the Nuclear localization signal element; it reads RRGRKRKAEKQ. Thr167 is subject to Phosphothreonine. A phosphoserine mark is found at Ser177 and Ser206. The span at 213–261 shows a compositional bias: basic and acidic residues; that stretch reads EEDKSKKKGQEEKQPKKQPKKDEEGQKEEDKPRKEPDKKEGKKEVESKR. The residue at position 271 (Ser271) is a Phosphoserine. Thr272 carries the phosphothreonine modification. 2 positions are modified to phosphoserine: Ser273 and Ser275. The span at 274-283 shows a compositional bias: acidic residues; that stretch reads DSEEEGDDQE. Residues 287-302 are compositionally biased toward basic residues; it reads KRKGGRNFQTAHRRNM. A compositionally biased stretch (basic and acidic residues) spans 305-349; the sequence is GQHEKEAADRKRKQEEQMETEQQNKDEGKKPEVKKVEKKRETSMD. 2 coiled-coil regions span residues 306-334 and 371-395; these read QHEKEAADRKRKQEEQMETEQQNKDEGKK and NRCIEALDELASLQVTMQQAQKHTE. The integrase-binding domain (IBD) stretch occupies residues 340 to 417; the sequence is VEKKRETSMD…VSQVIMEKST (78 aa). Ser434 is modified (phosphoserine). Position 437 is a phosphothreonine (Thr437). Ser443 carries the post-translational modification Phosphoserine. Over residues 446–473 the composition is skewed to basic and acidic residues; it reads EQRQHEEANKTKDQGKKGPNKKLEKEQT. A disordered region spans residues 446-530; it reads EQRQHEEANK…ISLKDSTLDN (85 aa). Positions 474–494 are enriched in polar residues; it reads GSKTLNGGSDAQDGNQPQHNG. The span at 498–530 shows a compositional bias: basic and acidic residues; it reads EDSKDNHEASTKKKPSSEERETEISLKDSTLDN. Ser514 is modified (phosphoserine). Position 517 is a citrulline (Arg517). Position 522 is a phosphoserine (Ser522). Thr527 bears the Phosphothreonine mark.

It belongs to the HDGF family. Monomer. Interacts with IFRD1/PC4. Isoform 2 interacts with SFRS1. Isoform 1 interacts (via IBD domain) with POGZ (via IBM motif) and CDCA7L (via IBM motifs). Interacts (via IBD domain) with KMT2A (via IBM motifs) with a moderate affinity whereas interacts with the KMT2A-MEN1 complex with a greater affinity; MEN1 enhances interaction of KMT2A with PSIP1. Interacts with fusion protein KMT2A-MLLT3. Interacts (via IBD domain) with IWS1 (via IBM motif), MED1 (via IBM motif) and DBF4 (via IBM motifs). As to quaternary structure, (Microbial infection) Interacts (via IBD domain) with human HIV-1 integrase protein (HIV-1 IN), determining its nuclear localization, its tight association with chromatin and its protection from the proteasome. In terms of assembly, (Microbial infection) Interacts with HIV-2 IN. Citrullinated by PADI4. As to expression, widely expressed. Expressed at high level in the thymus. Expressed in fetal and adult brain. Expressed in neurons, but not astrocytes. Markedly elevated in fetal as compared to adult brain. In the adult brain, expressed in the subventricular zone (SVZ), in hippocampus, and undetectable elsewhere. In the fetal brain, expressed in the germinal neuroepithelium and cortical plate regions.

It localises to the nucleus. Its function is as follows. Transcriptional coactivator involved in neuroepithelial stem cell differentiation and neurogenesis. Involved in particular in lens epithelial cell gene regulation and stress responses. May play an important role in lens epithelial to fiber cell terminal differentiation. May play a protective role during stress-induced apoptosis. Isoform 2 is a more general and stronger transcriptional coactivator. Isoform 2 may also act as an adapter to coordinate pre-mRNA splicing. Cellular cofactor for lentiviral integration. The protein is PC4 and SFRS1-interacting protein (PSIP1) of Homo sapiens (Human).